The following is a 687-amino-acid chain: CWF19-like protein 2 homolog (687 aa).

Residues Phe-6–Asp-51 adopt a coiled-coil conformation. Residues Glu-24–Ala-50 show a composition bias toward basic and acidic residues. Residues Glu-24–Asp-281 form a disordered region. Over residues Lys-66–Asn-92 the composition is skewed to basic residues. Low complexity predominate over residues Ser-93–Phe-107. Residues Ser-108 to Glu-131 adopt a coiled-coil conformation. Basic residues predominate over residues Arg-114–Arg-125. Ser-128 and Ser-130 each carry phosphoserine. Composition is skewed to basic and acidic residues over residues Val-146–Trp-157 and Phe-168–Glu-180. Residues Lys-290–Glu-325 adopt a coiled-coil conformation. A disordered region spans residues Val-355–Thr-383. Residues Lys-444 to Arg-475 are a coiled coil.

It belongs to the CWF19 family.

The protein is CWF19-like protein 2 homolog of Drosophila melanogaster (Fruit fly).